The primary structure comprises 85 residues: Neurotoxin 60.35 (85 aa).

The N-terminal stretch at 1-23 (MKFCVAVSLLIIASMAGVISVSG) is a signal peptide. One can recognise an LCN-type CS-alpha/beta domain in the interval 24–85 (YDVYPRDYAG…NFLSVIWKQC (62 aa)). 3 disulfide bridges follow: cysteine 38–cysteine 60, cysteine 46–cysteine 65, and cysteine 50–cysteine 67.

It belongs to the long (3 C-C) scorpion toxin superfamily. Expressed by the venom gland.

It localises to the secreted. The polypeptide is Neurotoxin 60.35 (Lychas mucronatus (Chinese swimming scorpion)).